Consider the following 305-residue polypeptide: Acetyl-coenzyme A carboxylase carboxyl transferase subunit beta (305 aa).

Residues 23–292 (GWLKCTHCNE…EENEPSPPPK (270 aa)) enclose the CoA carboxyltransferase N-terminal domain. 4 residues coordinate Zn(2+): Cys-27, Cys-30, Cys-46, and Cys-49. A C4-type zinc finger spans residues 27-49 (CTHCNELIHANELEQNSNCCPKC). The disordered stretch occupies residues 281-305 (FSEENEPSPPPKNLIKKTSPLKDKN).

Belongs to the AccD/PCCB family. As to quaternary structure, acetyl-CoA carboxylase is a heterohexamer composed of biotin carboxyl carrier protein (AccB), biotin carboxylase (AccC) and two subunits each of ACCase subunit alpha (AccA) and ACCase subunit beta (AccD). Zn(2+) is required as a cofactor.

Its subcellular location is the cytoplasm. The catalysed reaction is N(6)-carboxybiotinyl-L-lysyl-[protein] + acetyl-CoA = N(6)-biotinyl-L-lysyl-[protein] + malonyl-CoA. Its pathway is lipid metabolism; malonyl-CoA biosynthesis; malonyl-CoA from acetyl-CoA: step 1/1. In terms of biological role, component of the acetyl coenzyme A carboxylase (ACC) complex. Biotin carboxylase (BC) catalyzes the carboxylation of biotin on its carrier protein (BCCP) and then the CO(2) group is transferred by the transcarboxylase to acetyl-CoA to form malonyl-CoA. This chain is Acetyl-coenzyme A carboxylase carboxyl transferase subunit beta, found in Protochlamydia amoebophila (strain UWE25).